A 202-amino-acid chain; its full sequence is MIVKICGLKKAVDVAAAVDNGADMIGFVFAKSKRQVTVEKAHELAKNIPANVKKVGVFVNPTEEELKAAIKGVPLDIVQLHGQEPAKQANRTDAEVIKAFPVKDGKLPTNINDYPNAYILLDAPAEEYEGGSGKTFDWDKINRDMLTKNKLIIAGGLNAQNVQEAIKRFEPYAVDISSGVETNGEKDPEKIKCFIKTAKGVE.

This sequence belongs to the TrpF family.

The catalysed reaction is N-(5-phospho-beta-D-ribosyl)anthranilate = 1-(2-carboxyphenylamino)-1-deoxy-D-ribulose 5-phosphate. It participates in amino-acid biosynthesis; L-tryptophan biosynthesis; L-tryptophan from chorismate: step 3/5. This chain is N-(5'-phosphoribosyl)anthranilate isomerase, found in Listeria monocytogenes serotype 4b (strain CLIP80459).